The following is a 303-amino-acid chain: N-acetyl-D-glucosamine kinase (303 aa).

ATP-binding positions include 4–11 (GFDIGGTK) and 133–140 (GVGGGLIF). The Zn(2+) site is built by His157, Cys177, Cys179, and Cys184.

Belongs to the ROK (NagC/XylR) family. NagK subfamily.

The enzyme catalyses N-acetyl-D-glucosamine + ATP = N-acetyl-D-glucosamine 6-phosphate + ADP + H(+). Its pathway is cell wall biogenesis; peptidoglycan recycling. Catalyzes the phosphorylation of N-acetyl-D-glucosamine (GlcNAc) derived from cell-wall degradation, yielding GlcNAc-6-P. The sequence is that of N-acetyl-D-glucosamine kinase from Escherichia coli (strain K12 / DH10B).